Consider the following 61-residue polypeptide: Conotoxin Cal14.6 (61 aa).

The first 21 residues, 1–21, serve as a signal peptide directing secretion; it reads MKFLLFLSVALLLTSFIETEA. The propeptide occupies 22–38; the sequence is GPVNEAGVERLFRALVG. Residue Pro57 is modified to 4-hydroxyproline; partial. Pro60 bears the Proline amide mark.

Post-translationally, contains 2 disulfide bonds. In terms of tissue distribution, expressed by the venom duct.

The protein resides in the secreted. In terms of biological role, probable neurotoxin with unknown target. Possibly targets ion channels. The polypeptide is Conotoxin Cal14.6 (Californiconus californicus (California cone)).